The following is a 266-amino-acid chain: MARNSRIRITNNDKALYAKLVKNTKAKISRTKKKYGIDLSNEIELPPLESFQTRKEFNEWKRKQESFTNRANQNYQFVKNKYGIVASKAKINEIEKNTKEAQRIVDEQREEIEDKPFISGGKQQGTVGQRMQILSPSQVTGVSRPSDFNFDDVRSYARLRTLEEGMAEKASPDYYDRRMAQMHQNFIEIVEKSFNSYWLTDELVERLKKIPPDDFFELYLIFDEISFEYFDSEGEDVEASEAMLNKIHSYLDRYERGDVNLDLKGF.

The disordered stretch occupies residues 1 to 73; it reads MARNSRIRIT…QESFTNRANQ (73 aa). The interval 74–172 is intermediate; makes extensive contacts with the phage DNA polymerase; that stretch reads NYQFVKNKYG…EEGMAEKASP (99 aa). The segment at 173–266 is priming; sequence DYYDRRMAQM…GDVNLDLKGF (94 aa). An O-(5'-phospho-DNA)-serine modification is found at Ser-232. The tract at residues 256–258 is interaction with the viral DNA polymerase; sequence RGD.

Belongs to the phi29likevirus DNA terminal protein family. Interacts with the viral polymerase; this interaction allows the initiation of TP-primed DNA replication at both viral DNA ends. Binds to ssDNA. Interacts with the replication protein p1. Part of a DNA-gp3-gp16 complex.

It localises to the virion. Functionally, acts as a primer for DNA elongation during viral genomic replication. Acts as the small terminase protein during packaging. Recruits the phage DNA polymerase to the bacterial nucleoid. Primer terminal protein (TP) is covalently linked to the 5'-ends of both strands of the genome through a phosphodiester bond between the beta-hydroxyl group of a serine residue and the 5'-phosphate of the terminal deoxyadenylate (dAMP). To start replication, the DNA polymerase forms a heterodimer with a free TP that recognizes the replication origins at both 5' ends of the linear chromosome, and initiates replication using as primer the OH-group of Ser-232 of the TP. Since the polymerase initiates the replication on the second thymine, the TP-dAMP initiation product slides backwards to recover the template information of the first nucleotide. Hydrolyzes host peptidoglycans during virus entry. In Bacillus subtilis (Bacteriophage B103), this protein is DNA terminal protein (3).